We begin with the raw amino-acid sequence, 392 residues long: Galactokinase (392 aa).

Residues R37, E43, H44, and D46 each contribute to the alpha-D-galactose site. 4 residues coordinate ATP: G136, G138, S140, and S141. D186 provides a ligand contact to alpha-D-galactose. Residue D186 is the Proton acceptor of the active site. A Phosphoserine modification is found at S230. Y236 contacts alpha-D-galactose.

This sequence belongs to the GHMP kinase family. GalK subfamily. As to quaternary structure, homodimer.

The enzyme catalyses alpha-D-galactose + ATP = alpha-D-galactose 1-phosphate + ADP + H(+). It participates in carbohydrate metabolism; galactose metabolism. Its function is as follows. Catalyzes the transfer of a phosphate from ATP to alpha-D-galactose and participates in the first committed step in the catabolism of galactose. This is Galactokinase (Galk1) from Mus musculus (Mouse).